A 475-amino-acid chain; its full sequence is Ribulose bisphosphate carboxylase large chain (475 aa).

The propeptide occupies methionine 1–alanine 2. Proline 3 carries the post-translational modification N-acetylproline. Residue lysine 14 is modified to N6,N6,N6-trimethyllysine. Substrate contacts are provided by asparagine 123 and threonine 173. The active-site Proton acceptor is lysine 175. Position 177 (lysine 177) interacts with substrate. 3 residues coordinate Mg(2+): lysine 201, aspartate 203, and glutamate 204. Lysine 201 is subject to N6-carboxylysine. Residue histidine 294 is the Proton acceptor of the active site. Substrate-binding residues include arginine 295, histidine 327, and serine 379.

This sequence belongs to the RuBisCO large chain family. Type I subfamily. Heterohexadecamer of 8 large chains and 8 small chains. The cofactor is Mg(2+).

It localises to the plastid. The protein resides in the chloroplast. It carries out the reaction 2 (2R)-3-phosphoglycerate + 2 H(+) = D-ribulose 1,5-bisphosphate + CO2 + H2O. The enzyme catalyses D-ribulose 1,5-bisphosphate + O2 = 2-phosphoglycolate + (2R)-3-phosphoglycerate + 2 H(+). Its function is as follows. RuBisCO catalyzes two reactions: the carboxylation of D-ribulose 1,5-bisphosphate, the primary event in carbon dioxide fixation, as well as the oxidative fragmentation of the pentose substrate in the photorespiration process. Both reactions occur simultaneously and in competition at the same active site. The sequence is that of Ribulose bisphosphate carboxylase large chain from Nephroselmis olivacea (Green alga).